Reading from the N-terminus, the 526-residue chain is G-protein coupled receptor 161 (526 aa).

The Extracellular portion of the chain corresponds to 1–27; that stretch reads MNGSKNGTAVANSTNGLDDNGLMVLES. 3 N-linked (GlcNAc...) asparagine glycosylation sites follow: N2, N6, and N12. The chain crosses the membrane as a helical span at residues 28-48; sequence VSIIIIAILACLGNLVIVVTL. Topologically, residues 49 to 60 are cytoplasmic; the sequence is YKKPYLLTPSNK. A helical transmembrane segment spans residues 61–81; that stretch reads FVFSLTSSNLLLSVLMLPFVV. The Extracellular portion of the chain corresponds to 82-98; sequence ASSVRRDWMFGVVWCNF. A disulfide bond links C96 and C174. N97 carries N-linked (GlcNAc...) asparagine glycosylation. Residues 99–119 form a helical membrane-spanning segment; it reads TALLHLLVSSSSMLTLGAIAI. The Cytoplasmic portion of the chain corresponds to 120-139; it reads DRYYAVLYPMIYPMKITGNR. The chain crosses the membrane as a helical span at residues 140 to 160; the sequence is AVLAIVYIWLHSLVGCLPPLF. Residues 161-186 lie on the Extracellular side of the membrane; that stretch reads GWSSFEFDRFKWTCTVSWHKEISYTA. The helical transmembrane segment at 187–207 threads the bilayer; it reads FWVTWCCLLPLVAMLVCYGVI. At 208-263 the chain is on the cytoplasmic side; sequence FRVARIKARKVYCGSVVVSQEESSSQNNGRKNSNTSTSSSGSRKSLIYSGSQCKAF. A disordered region spans residues 231–250; sequence SSQNNGRKNSNTSTSSSGSR. Residues 264 to 284 traverse the membrane as a helical segment; sequence ITILVVLGTFLTTWGPYVVVI. Residues 285–300 lie on the Extracellular side of the membrane; it reads STEALLGKNSVSPQVE. The chain crosses the membrane as a helical span at residues 301–321; that stretch reads TLVSWLSFTSAVCHPLIYGLW. At 322–526 the chain is on the cytoplasmic side; it reads NKTVRKELLG…EEEMEREEKM (205 aa). Residues 505 to 526 are disordered; it reads IDEGIVKDDDDDEEEMEREEKM. A compositionally biased stretch (acidic residues) spans 512–526; sequence DDDDDEEEMEREEKM.

This sequence belongs to the G-protein coupled receptor 1 family.

It is found in the cell projection. Its subcellular location is the cilium membrane. The protein localises to the cell membrane. Its function is as follows. Key negative regulator of Shh signaling during neural tube development. Recruited to primary cilia and acts as a regulator of the PKA-dependent basal repression machinery in Shh signaling by increasing cAMP levels, leading to promote the PKA-dependent processing of gli3 into gli3r and repress the Shh signaling. In presence of shh, it is removed from primary cilia, preventing its activity and allowing activation of the Shh signaling. Required in left/right patterning by modulating Ca(2+) levels in the cells surrounding the Kupffer vesicle. The polypeptide is G-protein coupled receptor 161 (gpr161) (Danio rerio (Zebrafish)).